The sequence spans 150 residues: Large ribosomal subunit protein uL13 (150 aa).

Residues 128–150 (GSDHPHSAQEPKILSLNSESVTK) are disordered.

This sequence belongs to the universal ribosomal protein uL13 family. As to quaternary structure, part of the 50S ribosomal subunit.

In terms of biological role, this protein is one of the early assembly proteins of the 50S ribosomal subunit, although it is not seen to bind rRNA by itself. It is important during the early stages of 50S assembly. This is Large ribosomal subunit protein uL13 from Prochlorococcus marinus (strain NATL1A).